A 505-amino-acid polypeptide reads, in one-letter code: Activin receptor type-1B (505 aa).

An N-terminal signal peptide occupies residues 1–23; the sequence is MAESAGASSFFPLVVLLLAGSGG. At 24-126 the chain is on the extracellular side; that stretch reads SGPRGIQALL…EHPSMWGPVE (103 aa). Asn43 carries an N-linked (GlcNAc...) asparagine glycan. A helical transmembrane segment spans residues 127-149; sequence LVGIIAGPVFLLFLIIIIVFLVI. The Cytoplasmic segment spans residues 150 to 505; sequence NYHQRVYHNR…QLSVQEDVKI (356 aa). The GS domain maps to 177-206; sequence KTLQDLVYDLSTSGSGSGLPLFVQRTVART. Residues 207-497 form the Protein kinase domain; the sequence is IVLQEIIGKG…LRIKKTLSQL (291 aa). Residues 213 to 221 and Lys234 each bind ATP; that span reads IGKGRFGEV. Asp335 (proton acceptor) is an active-site residue. At Tyr380 the chain carries Phosphotyrosine.

This sequence belongs to the protein kinase superfamily. TKL Ser/Thr protein kinase family. TGFB receptor subfamily. As to quaternary structure, forms an activin receptor complex with activin receptor type-2 (ACVR2A or ACVR2B). Part of a complex consisting of MAGI2/ARIP1, ACVR2A, ACVR1B and SMAD3. Interacts with SMAD2 and SMAD3. Interacts with SMAD7. Interacts with FKBP1A. Interacts with IGSF1. Interacts with CRIPTO. Interacts with TDP2. Interacts with TSC22D1/TSC-22. Mg(2+) serves as cofactor. Requires Mn(2+) as cofactor. Autophosphorylated. Phosphorylated by activin receptor type-2 (ACVR2A or ACVR2B) in response to activin-binding at serine and threonine residues in the GS domain. Phosphorylation of ACVR1B by activin receptor type-2 regulates association with SMAD7. In terms of processing, ubiquitinated. Level of ubiquitination is regulated by the SMAD7-SMURF1 complex. Post-translationally, ubiquitinated. As to expression, urogenital ridge, testis, ovary, brain and lungs.

The protein localises to the cell membrane. It carries out the reaction L-threonyl-[receptor-protein] + ATP = O-phospho-L-threonyl-[receptor-protein] + ADP + H(+). The enzyme catalyses L-seryl-[receptor-protein] + ATP = O-phospho-L-seryl-[receptor-protein] + ADP + H(+). Its activity is regulated as follows. Activin receptor type-2 (ACVR2A or ACVR2B) activates the type-1 receptor through phosphorylation of its regulatory GS domain. Transmembrane serine/threonine kinase activin type-1 receptor forming an activin receptor complex with activin receptor type-2 (ACVR2A or ACVR2B). Transduces the activin signal from the cell surface to the cytoplasm and is thus regulating a many physiological and pathological processes including neuronal differentiation and neuronal survival, hair follicle development and cycling, FSH production by the pituitary gland, wound healing, extracellular matrix production, immunosuppression and carcinogenesis. Activin is also thought to have a paracrine or autocrine role in follicular development in the ovary. Within the receptor complex, type-2 receptors (ACVR2A and/or ACVR2B) act as a primary activin receptors whereas the type-1 receptors like ACVR1B act as downstream transducers of activin signals. Activin binds to type-2 receptor at the plasma membrane and activates its serine-threonine kinase. The activated receptor type-2 then phosphorylates and activates the type-1 receptor such as ACVR1B. Once activated, the type-1 receptor binds and phosphorylates the SMAD proteins SMAD2 and SMAD3, on serine residues of the C-terminal tail. Soon after their association with the activin receptor and subsequent phosphorylation, SMAD2 and SMAD3 are released into the cytoplasm where they interact with the common partner SMAD4. This SMAD complex translocates into the nucleus where it mediates activin-induced transcription. Inhibitory SMAD7, which is recruited to ACVR1B through FKBP1A, can prevent the association of SMAD2 and SMAD3 with the activin receptor complex, thereby blocking the activin signal. Activin signal transduction is also antagonized by the binding to the receptor of inhibin-B via the IGSF1 inhibin coreceptor. ACVR1B also phosphorylates TDP2. The protein is Activin receptor type-1B (Acvr1b) of Rattus norvegicus (Rat).